A 509-amino-acid polypeptide reads, in one-letter code: MEFSPRAAELTTLLESRMTNFYTNFQVDEIGRVVSVGDGIARVYGLNEIQAGEMVEFASGVKGIALNLENENVGIVVFGSDTAIKEGDLVKRTGSIVDVPAGKAMLGRVVDALGVPIDGKGALSDHERRRVEVKAPGIIERKSVHEPMQTGLKAVDSLVPIGRGQRELIIGDRQTGKTAIAIDTILNQKQMNSRGTNESETLYCVYVAIGQKRSTVAQLVQILSEANALEYSILVAATASDPAPLQFLAPYSGCAMGEYFRDNGMHALIIYDDLSKQAVAYRQMSLLLRRPPGREAFPGDVFYLHSRLLERAAKRSDQTGAGSSTALPVIETQAGDVSAYIPTNVISITDGQICLETDVFYRGIRPAINVGLSVSRVGSAAQLKAMKQVCGSSKLELAQYREVAAFAQFGSDLDAASQALLNRGARLTEVPKQPQYEPLPIEKQIVVIYAAVNGFCDRMPLDRISQYEKAILSTINPELQKSFLEKGGLTNERKMEPDASLKESTLPYL.

171–178 (GDRQTGKT) serves as a coordination point for ATP.

This sequence belongs to the ATPase alpha/beta chains family. F-type ATPases have 2 components, CF(1) - the catalytic core - and CF(0) - the membrane proton channel. CF(1) has five subunits: alpha(3), beta(3), gamma(1), delta(1), epsilon(1). CF(0) has three main subunits: a, b and c.

The protein resides in the mitochondrion. The protein localises to the mitochondrion inner membrane. Functionally, mitochondrial membrane ATP synthase (F(1)F(0) ATP synthase or Complex V) produces ATP from ADP in the presence of a proton gradient across the membrane which is generated by electron transport complexes of the respiratory chain. F-type ATPases consist of two structural domains, F(1) - containing the extramembraneous catalytic core, and F(0) - containing the membrane proton channel, linked together by a central stalk and a peripheral stalk. During catalysis, ATP synthesis in the catalytic domain of F(1) is coupled via a rotary mechanism of the central stalk subunits to proton translocation. Subunits alpha and beta form the catalytic core in F(1). Rotation of the central stalk against the surrounding alpha(3)beta(3) subunits leads to hydrolysis of ATP in three separate catalytic sites on the beta subunits. Subunit alpha does not bear the catalytic high-affinity ATP-binding sites. This is ATP synthase subunit alpha, mitochondrial (ATPA) from Triticum aestivum (Wheat).